The primary structure comprises 505 residues: Phase 1 flagellin (505 aa).

Belongs to the bacterial flagellin family.

The protein localises to the secreted. The protein resides in the bacterial flagellum. Functionally, flagellin is the subunit protein which polymerizes to form the filaments of bacterial flagella. This Salmonella naestved protein is Phase 1 flagellin (fliC).